A 270-amino-acid polypeptide reads, in one-letter code: Probable inner membrane protein BTH_II0599 (270 aa).

The next 6 helical transmembrane spans lie at 24 to 44 (RNPL…MLVS), 45 to 65 (LVPV…AVGF), 98 to 118 (LLTL…CSAL), 150 to 170 (ALIA…APVL), 198 to 218 (VYGL…AALM), and 226 to 246 (YALM…YCSF).

The protein resides in the cell inner membrane. (Microbial infection) Probably transports the toxic C-terminal region of CdiA-2 from B.pseudomallei strain 1026b across the inner membrane to the cytoplasm, where CdiA has a toxic effect. Expression in E.coli makes the bacteria sensitive to the tRNase domain of B.pseudomallei strain 1026b CdiA-2. The protein is Probable inner membrane protein BTH_II0599 of Burkholderia thailandensis (strain ATCC 700388 / DSM 13276 / CCUG 48851 / CIP 106301 / E264).